The sequence spans 114 residues: Dolichyl-diphosphooligosaccharide--protein glycosyltransferase subunit DAD2 (114 aa).

The Cytoplasmic segment spans residues 1–30; the sequence is MPKAAGDAKLLIQSLNKAYAATPTNLKIID. Residues 31-51 form a helical membrane-spanning segment; it reads LYVVFAVATALVQVVYMGIVG. Topologically, residues 52 to 54 are lumenal; it reads SFP. Residues 55–75 form a helical membrane-spanning segment; it reads FNSFLSGVLSSIGTAVLGVCL. The Cytoplasmic segment spans residues 76 to 93; the sequence is RIQVNKDNKEFKDLPPER. Residues 94-114 form a helical membrane-spanning segment; sequence AFADFVLCNLVLHLVIMNFLG.

This sequence belongs to the DAD/OST2 family. In terms of assembly, component of the oligosaccharyltransferase (OST) complex.

It is found in the endoplasmic reticulum membrane. Its pathway is protein modification; protein glycosylation. Functionally, subunit of the oligosaccharyl transferase (OST) complex that catalyzes the initial transfer of a defined glycan (Glc(3)Man(9)GlcNAc(2) in eukaryotes) from the lipid carrier dolichol-pyrophosphate to an asparagine residue within an Asn-X-Ser/Thr consensus motif in nascent polypeptide chains, the first step in protein N-glycosylation. N-glycosylation occurs cotranslationally and the complex associates with the Sec61 complex at the channel-forming translocon complex that mediates protein translocation across the endoplasmic reticulum (ER). All subunits are required for a maximal enzyme activity. The chain is Dolichyl-diphosphooligosaccharide--protein glycosyltransferase subunit DAD2 (DAD2) from Hordeum vulgare (Barley).